The sequence spans 335 residues: Auxin-responsive protein IAA6 (335 aa).

The short motif at 51 to 55 is the EAR-like (transcriptional repression) element; that stretch reads LKLGL. Disordered stretches follow at residues 81 to 102, 143 to 180, and 188 to 207; these read LSFF…GAKR, KKGC…VGWP, and NLAS…DNAN. Positions 217–321 constitute a PB1 domain; the sequence is NPLVKINMDG…TAKRLRVLRS (105 aa).

It belongs to the Aux/IAA family. In terms of assembly, homodimers and heterodimers. As to expression, highly expressed in roots. Expressed in shoots and flowers.

It is found in the nucleus. Aux/IAA proteins are short-lived transcriptional factors that function as repressors of early auxin response genes at low auxin concentrations. The chain is Auxin-responsive protein IAA6 (IAA6) from Oryza sativa subsp. japonica (Rice).